Here is a 315-residue protein sequence, read N- to C-terminus: 6-phosphogluconolactonase-like protein 2 (315 aa).

S42 and S64 each carry phosphoserine. Positions 59 to 85 (CKSTASAAEGKSGSSGSGSGSSKPKKE) are disordered. Positions 60–70 (KSTASAAEGKS) are enriched in low complexity.

It belongs to the glucosamine/galactosamine-6-phosphate isomerase family. 6-phosphogluconolactonase subfamily.

It localises to the cytoplasm. Its function is as follows. May be involved in regulation of tRNA subcellular distribution. The protein is 6-phosphogluconolactonase-like protein 2 (SOL2) of Saccharomyces cerevisiae (strain ATCC 204508 / S288c) (Baker's yeast).